Consider the following 457-residue polypeptide: COBRA-like protein 3 (457 aa).

The signal sequence occupies residues 1 to 35 (MAVGGAGSSRSVAPCCCCAVLLAAALLFSAPATTE). Asn45, Asn170, Asn178, Asn217, Asn242, Asn258, Asn326, Asn341, and Asn361 each carry an N-linked (GlcNAc...) asparagine glycan. A lipid anchor (GPI-anchor amidated asparagine) is attached at Asn430. The propeptide at 431 to 457 (ASPLTKQPLTLSVLVFSIVLATLLAYA) is removed in mature form. A helical transmembrane segment spans residues 437-457 (QPLTLSVLVFSIVLATLLAYA).

It belongs to the COBRA family.

The protein localises to the cell membrane. In terms of biological role, involved in determining the orientation of cell expansion, probably by playing an important role in cellulose deposition. May act by recruiting cellulose synthesizing complexes to discrete positions on the cell surface. The polypeptide is COBRA-like protein 3 (BC1L4) (Oryza sativa subsp. japonica (Rice)).